Consider the following 912-residue polypeptide: Phosphoenolpyruvate carboxylase (912 aa).

Residues His-138 and Lys-575 contribute to the active site.

Belongs to the PEPCase type 1 family. Mg(2+) is required as a cofactor.

It carries out the reaction oxaloacetate + phosphate = phosphoenolpyruvate + hydrogencarbonate. Functionally, forms oxaloacetate, a four-carbon dicarboxylic acid source for the tricarboxylic acid cycle. This chain is Phosphoenolpyruvate carboxylase, found in Lactobacillus helveticus (strain DPC 4571).